The following is a 69-amino-acid chain: uncharacterized protein (69 aa).

The Cytoplasmic portion of the chain corresponds to 1-15; it reads MLLYIVIIVACIISK. Residues 16-36 form a helical membrane-spanning segment; it reads LVPNEYWAIHLFFIIMIFMVY. The Extracellular segment spans residues 37–69; sequence MYKKLDIHQKYQFWNYTMSGLSGHNVQVTCKCY. An N-linked (GlcNAc...) asparagine; by host glycan is attached at asparagine 51.

This sequence belongs to the asfivirus X69R family.

It is found in the host membrane. This is an uncharacterized protein from African swine fever virus (isolate Tick/Malawi/Lil 20-1/1983) (ASFV).